We begin with the raw amino-acid sequence, 247 residues long: Uridylate kinase (247 aa).

18–21 (KLSG) serves as a coordination point for ATP. Gly-60 contributes to the UMP binding site. Residues Gly-61 and Arg-65 each contribute to the ATP site. UMP is bound by residues Asp-80 and 141 to 148 (TGNPFFTT). ATP contacts are provided by Thr-168, Tyr-174, and Asp-177.

The protein belongs to the UMP kinase family. In terms of assembly, homohexamer.

The protein localises to the cytoplasm. The catalysed reaction is UMP + ATP = UDP + ADP. It functions in the pathway pyrimidine metabolism; CTP biosynthesis via de novo pathway; UDP from UMP (UMPK route): step 1/1. With respect to regulation, inhibited by UTP. Catalyzes the reversible phosphorylation of UMP to UDP. This is Uridylate kinase from Pseudomonas fluorescens (strain ATCC BAA-477 / NRRL B-23932 / Pf-5).